The sequence spans 1366 residues: ABC multidrug transporter MDR2 (1366 aa).

The chain crosses the membrane as a helical span at residues 52-72 (IALIVIGTIAGIGAGIPFPLL). In terms of domain architecture, ABC transmembrane type-1 1 spans 56 to 354 (VIGTIAGIGA…MAPFMHIFAS (299 aa)). Asparagine 84 carries an N-linked (GlcNAc...) asparagine glycan. The next 5 membrane-spanning stretches (helical) occupy residues 106 to 126 (VLQV…HTGC), 180 to 200 (KVGL…VAFL), 202 to 222 (VATI…MAFG), 288 to 308 (IQFG…FWQG), and 323 to 343 (VSVG…FVLS). The ABC transporter 1 domain maps to 390-669 (IELQDVTFNY…DGVYAGMVRL (280 aa)). ATP is bound at residue 425 to 432 (GTSGSGKS). Residue asparagine 620 is glycosylated (N-linked (GlcNAc...) asparagine). Residues 727–746 (PEEADSLPTEPEAKKEKPKQ) form a disordered region. A run of 4 helical transmembrane segments spans residues 768-788 (LGLI…VIFG), 807-827 (GMLF…AVIV), 868-888 (LLVA…GTTI), and 898-918 (LFAG…VLLA). The 288-residue stretch at 768-1055 (LGLITSIMIG…MFALVPDISK (288 aa)) folds into the ABC transmembrane type-1 2 domain. Residue asparagine 976 is glycosylated (N-linked (GlcNAc...) asparagine). Helical transmembrane passes span 995 to 1015 (FWLS…YWWG) and 1019 to 1039 (ILAG…LLFS). Residues 1122–1361 (VQFRNVHFRY…CESYRANVIH (240 aa)) form the ABC transporter 2 domain. ATP is bound at residue 1157–1164 (GPSGSGKS).

It belongs to the ABC transporter superfamily. ABCB family. Multidrug resistance exporter (TC 3.A.1.201) subfamily.

Its subcellular location is the cell membrane. Its function is as follows. Pleiotropic ABC efflux transporter that may be involved in the modulation susceptibility to a wide range of unrelated cytotoxic compounds. Does not act as an efflux pump for azoles, including fluconazole, itraconazole, ketoconazole, miconazole and voriconazole, nor does it modulate susceptibility to cycloheximide. The chain is ABC multidrug transporter MDR2 from Trichophyton rubrum (strain ATCC MYA-4607 / CBS 118892) (Athlete's foot fungus).